The chain runs to 502 residues: Cytochrome P450 monooxygenase pyr9 (502 aa).

The chain crosses the membrane as a helical span at residues Glu5 to Ile25. 3 N-linked (GlcNAc...) asparagine glycosylation sites follow: Asn205, Asn291, and Asn372. Cys437 serves as a coordination point for heme.

The protein belongs to the cytochrome P450 family. The cofactor is heme.

Its subcellular location is the membrane. The protein operates within secondary metabolite biosynthesis; terpenoid biosynthesis. Cytochrome P450 monooxygenase; part of the gene cluster that mediates the biosynthesis of pyripyropene A, a specific human acyl-coenzyme A:cholesterol acyltransferase 2 inhibitor. The first step of the pathway is the synthesis of nicotinyl-CoA from nicotinic acid by the nicotinic acid-CoA ligase pyr1. Nicotinyl-CoA is then a substrate of polyketide synthase pyr2 to produce 4-hydroxy-6-(3-pyridinyl)-2H-pyran-2-one (HPPO) which is further prenylated by the polyprenyl transferase pyr6 to yield farnesyl-HPPO. The next steps consist of an epoxidation of farnesyl-HPPO to epoxyfarnesyl-HPPO by FAD-dependent monooxygenase pyr5 and a cyclization of the terpenoid portion by the terpene cyclase pyr4 to yield deacetyl-pyripyropene E. The 2 cytochrome P450 monooxygenases pyr3 and pyr9, and the 2 acetyltransferases pyr7 and pyr8 are involved in the conversion of deacetyl-pyripyropene E into pyripyropene A through several cycles of oxidation and acetylation steps. Pyr7 acetylates deacetyl-pyripyropene E to pyripyropene E which is oxidized to 11-deacetyl-pyripyropene O by pyr3, which is in turn acetylated into pyripyropene O by pyr8. Pyripyropene O is then oxidized to deacetyl-pyripyropene A by pyr9. Deacetyl-pyripyropene A is finally acetylated to pyripyropene A by pyr8. The protein is Cytochrome P450 monooxygenase pyr9 of Aspergillus fumigatus (strain ATCC MYA-4609 / CBS 101355 / FGSC A1100 / Af293) (Neosartorya fumigata).